Consider the following 251-residue polypeptide: Precorrin-4 C(11)-methyltransferase (251 aa).

It belongs to the precorrin methyltransferase family.

It catalyses the reaction precorrin-4 + S-adenosyl-L-methionine = precorrin-5 + S-adenosyl-L-homocysteine. It functions in the pathway cofactor biosynthesis; adenosylcobalamin biosynthesis; cob(II)yrinate a,c-diamide from precorrin-2 (aerobic route): step 4/10. Functionally, catalyzes the methylation of C-11 in precorrin-4 to form precorrin-5. In Mycobacterium tuberculosis (strain CDC 1551 / Oshkosh), this protein is Precorrin-4 C(11)-methyltransferase (cobM).